The primary structure comprises 853 residues: Aminotransferase PigE (853 aa).

Pyridoxal 5'-phosphate is bound at residue 503-504 (GT). An N6-(pyridoxal phosphate)lysine modification is found at lysine 645. Residue threonine 680 coordinates pyridoxal 5'-phosphate.

The protein belongs to the class-III pyridoxal-phosphate-dependent aminotransferase family. In terms of assembly, homodimer. Requires pyridoxal 5'-phosphate as cofactor.

Its pathway is antibiotic biosynthesis; prodigiosin biosynthesis. Its function is as follows. Involved in the biosynthesis of 2-methyl-3-n-amyl-pyrrole (MAP), one of the terminal products involved in the biosynthesis of the red antibiotic prodigiosin (Pig). Catalyzes the transamination to the aldehyde group of 3-acetyloctanal, resulting in an aminoketone, which spontaneously cyclizes to yield the dihydro form of MAP (H2MAP). The polypeptide is Aminotransferase PigE (Serratia sp. (strain ATCC 39006) (Prodigiosinella confusarubida)).